We begin with the raw amino-acid sequence, 276 residues long: MHPAAEHSPLGKSSEYVSTYTPSLLFPIPRAAKWAELGLSADTLPYKGVDYWNCFELSWLLPSGKPVVAIGEFSIPADSPNIIESKSFKLYLNSLNQTPFDDRATLEATLRTDLSAAAGKPVGVRIRSLQEVEAEGVVALPGVCIDDLDISVDSYEHPRPELLRCDASRVVEESVHSHLLKSNCPVTSQPDWGSVVVQYRGAALDHASLLAYLVSFRQHSDFHEQCVERIFLDLQRLLKPERLTVYARYVRRGGLDINPYRSTETADFANHRLVRQ.

Residue 83–85 (IES) participates in substrate binding. 85 to 86 (SK) lines the NADPH pocket. Catalysis depends on C184, which acts as the Thioimide intermediate. The Proton donor role is filled by D191. 223–224 (HE) serves as a coordination point for substrate. 252 to 253 (RG) contributes to the NADPH binding site.

The protein belongs to the GTP cyclohydrolase I family. QueF type 2 subfamily. Homodimer.

It localises to the cytoplasm. It catalyses the reaction 7-aminomethyl-7-carbaguanine + 2 NADP(+) = 7-cyano-7-deazaguanine + 2 NADPH + 3 H(+). It functions in the pathway tRNA modification; tRNA-queuosine biosynthesis. Its function is as follows. Catalyzes the NADPH-dependent reduction of 7-cyano-7-deazaguanine (preQ0) to 7-aminomethyl-7-deazaguanine (preQ1). In Pseudomonas fluorescens (strain ATCC BAA-477 / NRRL B-23932 / Pf-5), this protein is NADPH-dependent 7-cyano-7-deazaguanine reductase.